Here is a 232-residue protein sequence, read N- to C-terminus: Probable proteasome subunit alpha type-3 (232 aa).

This sequence belongs to the peptidase T1A family. In terms of assembly, the 26S proteasome consists of a 20S proteasome core and two 19S regulatory subunits. The 20S proteasome core is composed of 28 subunits that are arranged in four stacked rings, resulting in a barrel-shaped structure. The two end rings are each formed by seven alpha subunits, and the two central rings are each formed by seven beta subunits. The catalytic chamber with the active sites is on the inside of the barrel.

The protein localises to the cytoplasm. Its subcellular location is the nucleus. Functionally, the proteasome degrades poly-ubiquitinated proteins in the cytoplasm and in the nucleus. It is essential for the regulated turnover of proteins and for the removal of misfolded proteins. The proteasome is a multicatalytic proteinase complex that is characterized by its ability to cleave peptides with Arg, Phe, Tyr, Leu, and Glu adjacent to the leaving group at neutral or slightly basic pH. It has an ATP-dependent proteolytic activity. The protein is Probable proteasome subunit alpha type-3 (PRE9) of Encephalitozoon cuniculi (strain GB-M1) (Microsporidian parasite).